Consider the following 458-residue polypeptide: UDP-N-acetylmuramoylalanine--D-glutamate ligase (458 aa).

Glycine 118 to threonine 124 is a binding site for ATP.

This sequence belongs to the MurCDEF family.

Its subcellular location is the cytoplasm. It catalyses the reaction UDP-N-acetyl-alpha-D-muramoyl-L-alanine + D-glutamate + ATP = UDP-N-acetyl-alpha-D-muramoyl-L-alanyl-D-glutamate + ADP + phosphate + H(+). It participates in cell wall biogenesis; peptidoglycan biosynthesis. In terms of biological role, cell wall formation. Catalyzes the addition of glutamate to the nucleotide precursor UDP-N-acetylmuramoyl-L-alanine (UMA). The polypeptide is UDP-N-acetylmuramoylalanine--D-glutamate ligase (Ligilactobacillus salivarius (strain UCC118) (Lactobacillus salivarius)).